The sequence spans 550 residues: Acetyl-coenzyme A transporter 1 (550 aa).

2 stretches are compositionally biased toward basic and acidic residues: residues 1–12 (MSPTISHKDSSR) and 36–52 (DDSRRDSVGGEGDREVL). Residues 1–58 (MSPTISHKDSSRQRRSGMFSHALDMKSGPLPPGGWDDSRRDSVGGEGDREVLLGDAGP) are disordered. Topologically, residues 1–74 (MSPTISHKDS…PRSYRSELSS (74 aa)) are cytoplasmic. Phosphoserine is present on Ser42. Residues 75 to 95 (ILLLLFLYVLQGIPLGLAGSI) form a helical membrane-spanning segment. Topologically, residues 96 to 113 (PLILQSKNVSYTDQAFFS) are extracellular. Asn103 carries N-linked (GlcNAc...) asparagine glycosylation. A helical membrane pass occupies residues 114–134 (FVFWPFSLKLLWAPLVDAVYF). The Cytoplasmic portion of the chain corresponds to 135–141 (KNFGRRK). Residues 142–162 (SWLVPTQYTLGIFMIYLSTQV) form a helical membrane-spanning segment. At 163 to 175 (DRLLGNIDGRTPD) the chain is on the extracellular side. The helical transmembrane segment at 176–196 (VVALTVTFFLFEFLAATQDIA) threads the bilayer. Residues 197-217 (VDGWALTMLSRENVGYASTCN) are Cytoplasmic-facing. The chain crosses the membrane as a helical span at residues 218 to 238 (SVGQTAGYFLGNVLFLALESA). Residues 239 to 256 (DFCNKYLRFQPQPRGIVT) lie on the Extracellular side of the membrane. A helical transmembrane segment spans residues 257-277 (LSDFLFFWGTVFLITTTLVAL). Over 278–300 (LKKENREASIVKEETQGITDTYK) the chain is Cytoplasmic. Residues 301 to 321 (LLFSIIKMPAVLAFCLLILTS) traverse the membrane as a helical segment. At 322-344 (KIGFSAADAVTGLKLVEEGVPKE) the chain is on the extracellular side. Residues 345–365 (HLALLAVPMVPLQIILPLLIS) traverse the membrane as a helical segment. Topologically, residues 366-375 (KYTAGPQPLN) are cytoplasmic. The helical transmembrane segment at 376–396 (IFYKAMPYRLLLGLEYALLVW) threads the bilayer. The Extracellular portion of the chain corresponds to 397-405 (WTPKVEHQG). Residues 406–426 (GFPLYYYIIVLLSYALHQVTL) form a helical membrane-spanning segment. Residues 427-509 (YSMYVSIMAF…LGGSCVTALD (83 aa)) lie on the Cytoplasmic side of the membrane. The helical transmembrane segment at 510–530 (GYYVESIICVLIGFGWWFFLG) threads the bilayer. Residues 531–550 (PKFKKLQDEGPSSWKCKRNN) lie on the Extracellular side of the membrane.

The protein belongs to the SLC33A transporter family. Homodimerizes. Expressed in all adult tissues examined including brain, heart, kidney, liver and spleen, with maximum expression in liver and kidney.

It is found in the endoplasmic reticulum membrane. The catalysed reaction is acetyl-CoA(in) = acetyl-CoA(out). In terms of biological role, acetyl-CoA transporter that mediates active acetyl-CoA import through the endoplasmic reticulum (ER) membrane into the ER lumen where specific ER-based acetyl-CoA:lysine acetyltransferases are responsible for the acetylation of ER-based protein substrate, such as BACE1. Necessary for O-acetylation of gangliosides. This chain is Acetyl-coenzyme A transporter 1 (Slc33a1), found in Mus musculus (Mouse).